A 330-amino-acid chain; its full sequence is Aspartate--ammonia ligase (330 aa).

The protein belongs to the class-II aminoacyl-tRNA synthetase family. AsnA subfamily.

The protein localises to the cytoplasm. The catalysed reaction is L-aspartate + NH4(+) + ATP = L-asparagine + AMP + diphosphate + H(+). It participates in amino-acid biosynthesis; L-asparagine biosynthesis; L-asparagine from L-aspartate (ammonia route): step 1/1. This is Aspartate--ammonia ligase from Streptococcus pyogenes serotype M5 (strain Manfredo).